A 125-amino-acid polypeptide reads, in one-letter code: Ribosome-binding factor A (125 aa).

This sequence belongs to the RbfA family. Monomer. Binds 30S ribosomal subunits, but not 50S ribosomal subunits or 70S ribosomes.

Its subcellular location is the cytoplasm. Functionally, one of several proteins that assist in the late maturation steps of the functional core of the 30S ribosomal subunit. Associates with free 30S ribosomal subunits (but not with 30S subunits that are part of 70S ribosomes or polysomes). Required for efficient processing of 16S rRNA. May interact with the 5'-terminal helix region of 16S rRNA. This is Ribosome-binding factor A from Kosmotoga olearia (strain ATCC BAA-1733 / DSM 21960 / TBF 19.5.1).